Here is a 118-residue protein sequence, read N- to C-terminus: MAGEGEVIACHTLEVWNEKVKDANESKKLIVIDFTASWCPPCRFIAPVFAEMAKKFTNVVFFKIDVDELQAVAQEFKVEAMPTFVFMKEGNIIDRVVGAAKDEINEKLMKHGGLVASA.

The residue at position 2 (Ala-2) is an N-acetylalanine. One can recognise a Thioredoxin domain in the interval 2 to 113; sequence AGEGEVIACH…INEKLMKHGG (112 aa). Catalysis depends on nucleophile residues Cys-39 and Cys-42. The cysteines at positions 39 and 42 are disulfide-linked.

It belongs to the thioredoxin family. Plant H-type subfamily. As to quaternary structure, interacts with MDH1.

The protein localises to the cytoplasm. In terms of biological role, thiol-disulfide oxidoreductase involved in response to pathogens and oxidative stresses. Required for the response to victorin, a phytotoxin which induces programmed cell death in sensitive plants. Possesses insulin disulfide bonds reducing activity. In Arabidopsis thaliana (Mouse-ear cress), this protein is Thioredoxin H5 (TRX5).